The primary structure comprises 330 residues: Malate dehydrogenase (330 aa).

An NAD(+)-binding site is contributed by 12–18 (GAAGQIG). The substrate site is built by arginine 93 and arginine 99. Residues asparagine 106, glutamine 113, and 130-132 (VGN) each bind NAD(+). Substrate contacts are provided by asparagine 132 and arginine 163. The active-site Proton acceptor is the histidine 188.

The protein belongs to the LDH/MDH superfamily. MDH type 2 family.

The enzyme catalyses (S)-malate + NAD(+) = oxaloacetate + NADH + H(+). Its function is as follows. Catalyzes the reversible oxidation of malate to oxaloacetate. This is Malate dehydrogenase from Thermobifida fusca (strain YX).